The following is a 1225-amino-acid chain: uncharacterized protein (1225 aa).

The N-terminal stretch at methionine 1–alanine 27 is a signal peptide. Residue cysteine 28 is the site of N-palmitoyl cysteine attachment. A lipid anchor (S-diacylglycerol cysteine) is attached at cysteine 28. Positions glutamine 995 to serine 1014 are disordered.

The protein belongs to the MG307/MG309/MG338 family.

The protein resides in the cell membrane. This is an uncharacterized protein from Mycoplasma genitalium (strain ATCC 33530 / DSM 19775 / NCTC 10195 / G37) (Mycoplasmoides genitalium).